A 347-amino-acid polypeptide reads, in one-letter code: Dihydroorotase (347 aa).

Histidine 13 and histidine 15 together coordinate Zn(2+). Residues 15 to 17 and asparagine 41 each bind substrate; that span reads HLR. The Zn(2+) site is built by lysine 99, histidine 136, and histidine 174. An N6-carboxylysine modification is found at lysine 99. Histidine 136 provides a ligand contact to substrate. Leucine 219 serves as a coordination point for substrate. Aspartate 247 is a binding site for Zn(2+). Aspartate 247 is an active-site residue. Positions 251 and 263 each coordinate substrate.

Belongs to the metallo-dependent hydrolases superfamily. DHOase family. Class II DHOase subfamily. In terms of assembly, homodimer. The cofactor is Zn(2+).

The catalysed reaction is (S)-dihydroorotate + H2O = N-carbamoyl-L-aspartate + H(+). It participates in pyrimidine metabolism; UMP biosynthesis via de novo pathway; (S)-dihydroorotate from bicarbonate: step 3/3. Catalyzes the reversible cyclization of carbamoyl aspartate to dihydroorotate. The protein is Dihydroorotase of Rhizobium meliloti (strain 1021) (Ensifer meliloti).